Here is a 142-residue protein sequence, read N- to C-terminus: Small ribosomal subunit protein uS19 (142 aa).

Ser-2 carries the post-translational modification N-acetylserine. Residues Lys-24, Lys-35, and Lys-64 each participate in a glycyl lysine isopeptide (Lys-Gly) (interchain with G-Cter in ubiquitin) cross-link.

Belongs to the universal ribosomal protein uS19 family. In terms of assembly, component of the small ribosomal subunit (SSU). Mature yeast ribosomes consist of a small (40S) and a large (60S) subunit. The 40S small subunit contains 1 molecule of ribosomal RNA (18S rRNA) and 33 different proteins (encoded by 57 genes). The large 60S subunit contains 3 rRNA molecules (25S, 5.8S and 5S rRNA) and 46 different proteins (encoded by 81 genes).

The protein localises to the cytoplasm. Component of the ribosome, a large ribonucleoprotein complex responsible for the synthesis of proteins in the cell. The small ribosomal subunit (SSU) binds messenger RNAs (mRNAs) and translates the encoded message by selecting cognate aminoacyl-transfer RNA (tRNA) molecules. The large subunit (LSU) contains the ribosomal catalytic site termed the peptidyl transferase center (PTC), which catalyzes the formation of peptide bonds, thereby polymerizing the amino acids delivered by tRNAs into a polypeptide chain. The nascent polypeptides leave the ribosome through a tunnel in the LSU and interact with protein factors that function in enzymatic processing, targeting, and the membrane insertion of nascent chains at the exit of the ribosomal tunnel. uS19 is involved in the nuclear export of the small ribosomal subunit precursor. Has a role in the late stage of the assembly of pre-40S particles within the nucleus and controls their export to the cytoplasm. This Saccharomyces cerevisiae (strain ATCC 204508 / S288c) (Baker's yeast) protein is Small ribosomal subunit protein uS19.